The following is a 109-amino-acid chain: Large ribosomal subunit protein uL24 (109 aa).

The protein belongs to the universal ribosomal protein uL24 family. Part of the 50S ribosomal subunit.

Its function is as follows. One of two assembly initiator proteins, it binds directly to the 5'-end of the 23S rRNA, where it nucleates assembly of the 50S subunit. In terms of biological role, one of the proteins that surrounds the polypeptide exit tunnel on the outside of the subunit. The protein is Large ribosomal subunit protein uL24 of Rickettsia rickettsii (strain Iowa).